We begin with the raw amino-acid sequence, 172 residues long: Large ribosomal subunit protein uL10 (172 aa).

The protein belongs to the universal ribosomal protein uL10 family. In terms of assembly, part of the ribosomal stalk of the 50S ribosomal subunit. The N-terminus interacts with L11 and the large rRNA to form the base of the stalk. The C-terminus forms an elongated spine to which L12 dimers bind in a sequential fashion forming a multimeric L10(L12)X complex.

Its function is as follows. Forms part of the ribosomal stalk, playing a central role in the interaction of the ribosome with GTP-bound translation factors. The polypeptide is Large ribosomal subunit protein uL10 (Bartonella bacilliformis (strain ATCC 35685 / KC583 / Herrer 020/F12,63)).